Reading from the N-terminus, the 211-residue chain is RNA chaperone ProQ (211 aa).

Positions 113-147 are disordered; the sequence is RRAVEKANNPKANKKRSVYHSGNKSENKKSAGKKF.

It belongs to the ProQ family.

The protein resides in the cytoplasm. Functionally, RNA chaperone with significant RNA binding, RNA strand exchange and RNA duplexing activities. The sequence is that of RNA chaperone ProQ from Histophilus somni (strain 129Pt) (Haemophilus somnus).